Reading from the N-terminus, the 301-residue chain is Alpha-ketoglutarate-dependent sulfate ester dioxygenase (301 aa).

Residue His-81 coordinates substrate. Residues His-108 and Asp-110 each coordinate Fe cation. Val-111 provides a ligand contact to substrate. Thr-135 provides a ligand contact to 2-oxoglutarate. Fe cation is bound at residue His-264. 2-oxoglutarate is bound by residues Arg-275 and Arg-279.

This sequence belongs to the TfdA dioxygenase family. Homotetramer. Fe(2+) serves as cofactor.

It catalyses the reaction a primary linear alkyl sulfate ester + 2-oxoglutarate + O2 = an aldehyde + sulfate + succinate + CO2 + H(+). The enzyme catalyses 2-ethylhexyl sulfate + 2-oxoglutarate + O2 = 2-ethylhexanal + sulfate + succinate + CO2 + H(+). The catalysed reaction is decyl sulfate + 2-oxoglutarate + O2 = decanal + sulfate + succinate + CO2 + H(+). It carries out the reaction hexyl sulfate + 2-oxoglutarate + O2 = hexanal + sulfate + succinate + CO2 + H(+). It catalyses the reaction nonyl sufate + 2-oxoglutarate + O2 = nonanal + sulfate + succinate + CO2 + H(+). Its activity is regulated as follows. Strongly stimulated by ascorbate. In terms of biological role, catalyzes the oxygenolytic cleavage of 2-ethylhexyl sulfate (2-EHS) in the presence of alpha-ketoglutarate to yield 2-ethyl-hexanal and succinate, the decarboxylated form of alpha-ketoglutarate. It can accept a wide range of alpha-keto acids including 2-oxo-valerate, 2-oxo-adipate, 2-oxo-octanoate, 3-methyl-2-oxo-butyrate, oxaloacetate-alpha-ketoadipate, and alpha-ketooctanoate. It can catalyze the cleavage of medium-chain alkyl sulfate esters such as butylsulfate, pentylsulfate, hexylsulfate, heptylsulfate, octylsulfate, nonylsulfate, decylsulfate and sodium dodecyl sulfate (SDS). This Pseudomonas putida (Arthrobacter siderocapsulatus) protein is Alpha-ketoglutarate-dependent sulfate ester dioxygenase.